A 955-amino-acid polypeptide reads, in one-letter code: Vacuolar membrane protease (955 aa).

Residues 1 to 16 are Cytoplasmic-facing; the sequence is MASLRLPRANPLAFTR. Residues 17 to 37 form a helical membrane-spanning segment; sequence WPVTVITAIVYLALLIPLLVV. The Vacuolar portion of the chain corresponds to 38-390; the sequence is HHVVPSAPSS…STFVLFQLHT (353 aa). N-linked (GlcNAc...) asparagine glycans are attached at residues Asn53 and Asn119. Residues His174 and Asp186 each contribute to the Zn(2+) site. Glu220 (proton acceptor) is an active-site residue. Zn(2+)-binding residues include Glu221, Glu246, and His319. A helical transmembrane segment spans residues 391–411; sequence LFALLVTLLIVGPLTLLFTSI. Topologically, residues 412–442 are cytoplasmic; sequence ALTKADKMYLFRSSAKSEDRLDVVPLQGLRG. The helical transmembrane segment at 443–463 threads the bilayer; that stretch reads FFRFPFLFGIPTVVTVGLAYL. Over 464–473 the chain is Vacuolar; sequence VTKVNPYIIH. The helical transmembrane segment at 474-494 threads the bilayer; that stretch reads SSAYAVWSMMVAAWVFLAWFV. The Cytoplasmic segment spans residues 495-508; the sequence is SRVADFARPSAFHR. A helical transmembrane segment spans residues 509-529; sequence IYTLTWMYVLSWVSAVIATVY. The Vacuolar portion of the chain corresponds to 530–533; sequence ANQR. A helical membrane pass occupies residues 534 to 554; it reads GLAGGYFIFFFHAGIFLAKWI. The Cytoplasmic segment spans residues 555 to 656; it reads SYLELFALPS…WSYALPKWTW (102 aa). Low complexity predominate over residues 574-590; that stretch reads SASGRASGHGSRRGTTS. A disordered region spans residues 574-611; it reads SASGRASGHGSRRGTTSGEDDGEEAEEEPTESTSLLGS. Residues 591 to 603 are compositionally biased toward acidic residues; it reads GEDDGEEAEEEPT. The helical transmembrane segment at 657–677 threads the bilayer; sequence VLQLLLTAPITLIMVGPLALL. Residues 678–693 lie on the Vacuolar side of the membrane; sequence TISAISQTGQDGGHPL. A helical membrane pass occupies residues 694 to 714; it reads FAYVAIAIFTTIMLTPLLPFI. The Cytoplasmic segment spans residues 715 to 721; sequence HRYTYHV. Residues 722 to 742 traverse the membrane as a helical segment; the sequence is PLFLLAVFLGTLIYNLVAFPF. The Vacuolar portion of the chain corresponds to 743–955; the sequence is SDSNRLKLYY…RRAFEIGNDD (213 aa). N-linked (GlcNAc...) asparagine glycosylation is present at Asn826.

The protein belongs to the peptidase M28 family. Zn(2+) is required as a cofactor.

Its subcellular location is the vacuole membrane. Functionally, may be involved in vacuolar sorting and osmoregulation. This chain is Vacuolar membrane protease, found in Aspergillus oryzae (strain ATCC 42149 / RIB 40) (Yellow koji mold).